Reading from the N-terminus, the 195-residue chain is Transmembrane protein 239 (195 aa).

A run of 2 helical transmembrane segments spans residues 105–125 and 145–171; these read LWGL…HALF and HLLP…LLLF.

Its subcellular location is the membrane. This Homo sapiens (Human) protein is Transmembrane protein 239 (TMEM239).